The chain runs to 561 residues: MRLWKSMAWGILLWHSQSGALCPAWPPARAAEEITRLQQQLADWNDIYWKQGVSAVDDSVYDQLSARLVQWQRCVGQDVSSTPVSPPLNGTTMHPVAHTGVRKLADRQAVEQWMRGRSELWVQPKVDGVAVTLVYQNGKLTRAISRGNGLQGEDWTPKIRLIPSIPQTTQGALANAVLQGEIFLQREGHIQQRMGGMNARSKVAGMLMRQDNASALNSLGIFIWAWPDGPANMPERLSQLAKAGFSLTNKYTLAVKDASEVERARQSWLTSALPFVTDGVVIRMAKEPASQHWRPGQGDWLAAWKYPPVAQVAQVSAIQFSVGKSGKITVVASLVPVILDDKRVQRVNIDSVKRWEAWDIAPGDQILVSLAGQGIPRLDEVVWRSRERSKPVPPDSHFNSLTCFYASETCQEQFISRLVWLGSRSALGLDGMGEASWRALHQTHRFKHIFSWLALTSAQIANTPGFAKGKSEQIWRQFNLARRQSFTRWIMAMDIPLTQAALQASGDRSWEQLLMRTEQHWWQLPATGERRAGRVIDWRNNPQIKTLSRWLAAQHIPGFGS.

Residue Lys-125 is the N6-AMP-lysine intermediate of the active site.

Belongs to the NAD-dependent DNA ligase family. LigB subfamily.

It carries out the reaction NAD(+) + (deoxyribonucleotide)n-3'-hydroxyl + 5'-phospho-(deoxyribonucleotide)m = (deoxyribonucleotide)n+m + AMP + beta-nicotinamide D-nucleotide.. In terms of biological role, catalyzes the formation of phosphodiester linkages between 5'-phosphoryl and 3'-hydroxyl groups in double-stranded DNA using NAD as a coenzyme and as the energy source for the reaction. The chain is DNA ligase B from Salmonella gallinarum (strain 287/91 / NCTC 13346).